Here is a 288-residue protein sequence, read N- to C-terminus: Ninja-family protein 6 (288 aa).

Disordered regions lie at residues 1–50 and 66–207; these read MASR…KRPR and LHAD…TRTG. The span at 12–23 shows a compositional bias: gly residues; it reads AGEGAGPPGDAG. Residues 76 to 86 are compositionally biased toward low complexity; the sequence is LPLLRTTSLPT. The segment covering 91 to 103 has biased composition (basic and acidic residues); that stretch reads ERWRRREMQSRRR. Polar residues predominate over residues 131-173; sequence RRSNASQGSNSASTTEQGIGGSMFNQSADAKSPSTSDNRNQND. The span at 195 to 207 shows a compositional bias: low complexity; the sequence is RLRTLGSLTTRTG.

The protein belongs to the Ninja family.

It localises to the nucleus. In Zea mays (Maize), this protein is Ninja-family protein 6.